The sequence spans 634 residues: MDCEGTDGEGLGCTGWFSVEAIVEKHTGETISEDEIEYSSDTGSDLIGFIDDSNISDGAEQQVAQALFQAQETQANKKAVRALKRKLLGSQNSPLQDITNQSNSQQSTDEVNNLQAKRRAVDSVPDSGYGYTEVETLTPVQVDKHNEQNGDSVCSQGGSSGSVSDMEVDIGAQASSVTKICELLKCSNVKAALLSKFKTVYGVSYTELVRVFKSDKTCCSDWVCAAFGVAGSVAESLKTLIQPYCLYYHIQCLTCNWGVLPLMLIRFTCAKNRATIKKCLCTLLNVPDTQLLIEPPKLRSTAVALYFYKTGLSNISETHGDTPEWIVRQTQLEHSFEDTIFDLSKMVQWAFDHDITDDSEIAFKYAQLADIESNAAAFLKSNCQAKYVKDCATMTRHYKRAQKRSMGMSQWLQHRCSKIEDGGTWKDIARFLRYQNVNFIYFLQVLKQFLKGTPKHNCIVIYGPPNTGKSQFAMSFIKFVQGSVISYVNSNSHFWLQPLEDAKVALLDDATYGCWLYIDKYLRNFLDGNPCCIDRKHRSLIQVRCPPLIITSNINPQDDNSLMYLHSRVTVIPFPNTFPFDSNGNPVYELTDVNWKSFFSTTWSRLDLEEDADKENGEPLPAFKCVPGENTRLL.

A Nuclear localization signal motif is present at residues 84 to 86 (KRK). The residue at position 90 (Ser-90) is a Phosphoserine; by host. Positions 91–115 (QNSPLQDITNQSNSQQSTDEVNNLQ) are enriched in polar residues. The disordered stretch occupies residues 91-128 (QNSPLQDITNQSNSQQSTDEVNNLQAKRRAVDSVPDSG). Residues 172-338 (AQASSVTKIC…QTQLEHSFED (167 aa)) are DNA-binding region. In terms of domain architecture, SF3 helicase spans 437-587 (VNFIYFLQVL…FPFDSNGNPV (151 aa)). 463 to 470 (GPPNTGKS) is a binding site for ATP.

It belongs to the papillomaviridae E1 protein family. Can form hexamers. Interacts with E2 protein; this interaction increases E1 DNA binding specificity. Interacts with host DNA polymerase subunit POLA2. Interacts with host single stranded DNA-binding protein RPA1. Interacts with host TOP1; this interaction stimulates the enzymatic activity of TOP1. Phosphorylated.

The protein localises to the host nucleus. The catalysed reaction is Couples ATP hydrolysis with the unwinding of duplex DNA by translocating in the 3'-5' direction.. The enzyme catalyses ATP + H2O = ADP + phosphate + H(+). Its function is as follows. ATP-dependent DNA 3'-5' helicase required for initiation of viral DNA replication. It forms a complex with the viral E2 protein. The E1-E2 complex binds to the replication origin which contains binding sites for both proteins. During the initial step, a dimer of E1 interacts with a dimer of protein E2 leading to a complex that binds the viral origin of replication with high specificity. Then, a second dimer of E1 displaces the E2 dimer in an ATP-dependent manner to form the E1 tetramer. Following this, two E1 monomers are added to each half of the site, which results in the formation of two E1 trimers on the viral ori. Subsequently, two hexamers will be created. The double hexamer acts as a bi-directional helicase machinery and unwinds the viral DNA and then recruits the host DNA polymerase to start replication. This chain is Replication protein E1, found in Human papillomavirus 69.